The chain runs to 223 residues: N-terminal Xaa-Pro-Lys N-methyltransferase 1 (223 aa).

Methionine 1 carries the post-translational modification N-acetylmethionine. Position 2 is an N-acetylthreonine; in N-terminal Xaa-Pro-Lys N-methyltransferase 1, N-terminally processed (threonine 2). S-adenosyl-L-methionine is bound by residues glycine 69, arginine 74, 91–93, 119–120, and glutamine 135; these read DIT and LQ.

The protein belongs to the methyltransferase superfamily. NTM1 family.

The protein localises to the nucleus. It catalyses the reaction N-terminal L-alanyl-L-prolyl-L-lysyl-[protein] + 3 S-adenosyl-L-methionine = N-terminal N,N,N-trimethyl-L-alanyl-L-prolyl-L-lysyl-[protein] + 3 S-adenosyl-L-homocysteine + 3 H(+). It carries out the reaction N-terminal L-seryl-L-prolyl-L-lysyl-[protein] + 3 S-adenosyl-L-methionine = N-terminal N,N,N-trimethyl-L-seryl-L-prolyl-L-lysyl-[protein] + 3 S-adenosyl-L-homocysteine + 3 H(+). The enzyme catalyses N-terminal L-prolyl-L-prolyl-L-lysyl-[protein] + 2 S-adenosyl-L-methionine = N-terminal N,N-dimethyl-L-prolyl-L-prolyl-L-lysyl-[protein] + 2 S-adenosyl-L-homocysteine + 2 H(+). Distributive alpha-N-methyltransferase that methylates the N-terminus of target proteins containing the N-terminal motif [Ala/Gly/Pro/Ser]-Pro-Lys when the initiator Met is cleaved. Specifically catalyzes mono-, di- or tri-methylation of the exposed alpha-amino group of the Ala, Gly or Ser residue in the [Ala/Gly/Ser]-Pro-Lys motif and mono- or di-methylation of Pro in the Pro-Pro-Lys motif. Some of the substrates may be primed by NTMT2-mediated monomethylation. Catalyzes the trimethylation of the N-terminal Gly in CENPA (after removal of Met-1). Responsible for the N-terminal methylation of KLHL31, MYL2, MYL3, RB1, RCC1, RPL23A and SET. Required during mitosis for normal bipolar spindle formation and chromosome segregation via its action on RCC1. The sequence is that of N-terminal Xaa-Pro-Lys N-methyltransferase 1 (NTMT1) from Homo sapiens (Human).